A 349-amino-acid polypeptide reads, in one-letter code: tRNA N6-adenosine threonylcarbamoyltransferase (349 aa).

Fe cation-binding residues include His117 and His121. Substrate-binding positions include 140–144, Asp173, Gly186, and Asn284; that span reads LVSGG. Asp312 is a binding site for Fe cation.

It belongs to the KAE1 / TsaD family. Fe(2+) serves as cofactor.

The protein localises to the cytoplasm. It catalyses the reaction L-threonylcarbamoyladenylate + adenosine(37) in tRNA = N(6)-L-threonylcarbamoyladenosine(37) in tRNA + AMP + H(+). Required for the formation of a threonylcarbamoyl group on adenosine at position 37 (t(6)A37) in tRNAs that read codons beginning with adenine. Is involved in the transfer of the threonylcarbamoyl moiety of threonylcarbamoyl-AMP (TC-AMP) to the N6 group of A37, together with TsaE and TsaB. TsaD likely plays a direct catalytic role in this reaction. This chain is tRNA N6-adenosine threonylcarbamoyltransferase, found in Psychrobacter arcticus (strain DSM 17307 / VKM B-2377 / 273-4).